We begin with the raw amino-acid sequence, 96 residues long: uncharacterized protein (96 aa).

Residues M1–I21 form a helical membrane-spanning segment.

Its subcellular location is the membrane. This is an uncharacterized protein from Saccharomyces cerevisiae (strain ATCC 204508 / S288c) (Baker's yeast).